Here is a 358-residue protein sequence, read N- to C-terminus: Putative inhibitor of apoptosis (358 aa).

BIR repeat units lie at residues 4 to 70 (EKDR…CPFL) and 90 to 157 (YAAR…CEYL). The Zn(2+) site is built by cysteine 127, cysteine 130, histidine 147, and cysteine 154. In terms of domain architecture, CARD spans 193-283 (EPPNDLSLIR…MLYKHLFVQQ (91 aa)). Residues 311 to 346 (CKVCMDKEVSIVFIPCGHLVVCKDCAPSLRKCPICR) form an RING-type zinc finger.

It belongs to the IAP family.

In Sus scrofa (Pig), this protein is Putative inhibitor of apoptosis (PIAP).